Reading from the N-terminus, the 330-residue chain is Putative protein DDB_G0285185 (330 aa).

Positions 212 to 240 are disordered; it reads NKLQNQVQSSPKLSSPITKNKEQIVSTTS. Residues 214–240 are compositionally biased toward polar residues; that stretch reads LQNQVQSSPKLSSPITKNKEQIVSTTS.

This is Putative protein DDB_G0285185 from Dictyostelium discoideum (Social amoeba).